The sequence spans 619 residues: Adagio protein 3 (619 aa).

The region spanning 44 to 123 (VGMFYYPMTP…SEIRRCLEEG (80 aa)) is the PAS domain. C91 is modified (S-4a-FMN cysteine). A PAC domain is found at 127–168 (QGELLNFRKDGTPLVNRLRLAPIRDDDGTITHVIGIQVFSET). An F-box domain is found at 211–257 (ILQLSDEVLAHNILSRLTPRDVASIGSACRRLRQLTKNESVRKMVCQ). Kelch repeat units lie at residues 304 to 354 (SRCN…TSSP), 357 to 404 (RWGH…AGGT), 409 to 457 (RSWH…PTSW), 462 to 513 (RLGH…ECSA), and 523 to 571 (RLDH…NVPG).

The protein belongs to the ADAGIO family. Interacts with ADO1 (via Kelch repeats), ADO2 (via Kelch repeats), SKP1A/ASK1, SKP1B/ASK2, ASK3, SKP1K/ASK11, ASK12, ASK13 and SKP1N/ASK14. Interacts (via Kelch repeats) with CDF1, CDF2 and CDF3. Interacts (via N-terminus) with CO and GI (via N-terminus) in a blue-light-dependent manner. Post-translationally, FMN binds covalently to cysteine after exposure to blue light and is reversed in the dark. As to expression, highly expressed in stomata and leaves and to a lower extent in seeds, roots, rosettes, stems and siliques. Also present in sepals and anther filaments.

Its subcellular location is the nucleus. It is found in the cytoplasm. The protein operates within protein modification; protein ubiquitination. In terms of biological role, component of an E3 ubiquitin ligase complex that plays a central role in blue light-dependent circadian cycles. Acts as a blue light photoreceptor, due to the presence of FMN, that mediates light-regulated protein degradation of critical clock components by targeting them to the proteasome complex. The SCF(ADO3) E3 ubiquitin ligase complex is involved in the regulation of circadian clock-dependent processes including transition to flowering time, hypocotyl elongation, cotyledons and leaf movement rhythms. Forms a complex with 'GIGANTEA' (GI) to regulate 'CONSTANS' (CO) expression. Promotes CO expression during the light period of long days by decreasing the stability of CDF1 and CDF2 and by interacting directly with the CO protein and stabilizing it. ADO3 function is mainly GI dependent. Does not act as a regulator of CDF1 transcription. The interactions of ADO1/ZTL and ADO2 with ADO3 prevent its interaction with CDF1. This chain is Adagio protein 3 (ADO3), found in Arabidopsis thaliana (Mouse-ear cress).